A 259-amino-acid chain; its full sequence is Deoxyribose-phosphate aldolase (259 aa).

The active-site Proton donor/acceptor is the Asp-102. The Schiff-base intermediate with acetaldehyde role is filled by Lys-167. The active-site Proton donor/acceptor is the Lys-201.

It belongs to the DeoC/FbaB aldolase family. DeoC type 2 subfamily.

It is found in the cytoplasm. The catalysed reaction is 2-deoxy-D-ribose 5-phosphate = D-glyceraldehyde 3-phosphate + acetaldehyde. Its pathway is carbohydrate degradation; 2-deoxy-D-ribose 1-phosphate degradation; D-glyceraldehyde 3-phosphate and acetaldehyde from 2-deoxy-alpha-D-ribose 1-phosphate: step 2/2. Catalyzes a reversible aldol reaction between acetaldehyde and D-glyceraldehyde 3-phosphate to generate 2-deoxy-D-ribose 5-phosphate. The chain is Deoxyribose-phosphate aldolase from Edwardsiella ictaluri (strain 93-146).